A 250-amino-acid polypeptide reads, in one-letter code: Global transcriptional regulator CodY (250 aa).

Positions 1-147 are GAF domain; it reads MSTLLEKTRK…GATVVGLEIL (147 aa). Positions 195-214 form a DNA-binding region, H-T-H motif; sequence ASKIADKVGITRSVIVNALR.

It belongs to the CodY family.

The protein resides in the cytoplasm. Its function is as follows. DNA-binding global transcriptional regulator which is involved in the adaptive response to starvation and acts by directly or indirectly controlling the expression of numerous genes in response to nutrient availability. During rapid exponential growth, CodY is highly active and represses genes whose products allow adaptation to nutrient depletion. This Thermoanaerobacter sp. (strain X514) protein is Global transcriptional regulator CodY.